The chain runs to 305 residues: Ribonucleoside-diphosphate reductase small subunit (305 aa).

E64, E94, and H97 together coordinate Fe cation. Residue Y101 is part of the active site. The helical transmembrane segment at 150–170 threads the bilayer; the sequence is VLIFYLIEGVFFISSFYCIGL. Positions 157, 191, and 194 each coordinate Fe cation.

Belongs to the ribonucleoside diphosphate reductase small chain family. In terms of assembly, heterotetramer composed of a homodimer of the large subunit (R1) and a homodimer of the small subunit (R2). Larger multisubunit protein complex are also active, composed of (R1)n(R2)n. Fe cation serves as cofactor.

The protein localises to the host membrane. The catalysed reaction is a 2'-deoxyribonucleoside 5'-diphosphate + [thioredoxin]-disulfide + H2O = a ribonucleoside 5'-diphosphate + [thioredoxin]-dithiol. Functionally, ribonucleoside-diphosphate reductase holoenzyme provides the precursors necessary for viral DNA synthesis. Allows virus growth in non-dividing cells, as well as reactivation from latency in infected hosts. Catalyzes the biosynthesis of deoxyribonucleotides from the corresponding ribonucleotides. The chain is Ribonucleoside-diphosphate reductase small subunit from Alcelaphine herpesvirus 1 (strain C500) (AlHV-1).